The sequence spans 274 residues: Mitochondrial outer membrane protein porin 1 (274 aa).

The protein belongs to the eukaryotic mitochondrial porin (TC 1.B.8.1) family. As to expression, expressed in shoots and roots. Also expressed in callus, leaves, panicles, sheaths and stems.

It localises to the mitochondrion outer membrane. Its function is as follows. Forms a channel through the mitochondrial outer membrane that allows diffusion of small hydrophilic molecules. The channel adopts an open conformation at low or zero membrane potential and a closed conformation at potentials above 30-40 mV. The open state has a weak anion selectivity whereas the closed state is cation-selective. The chain is Mitochondrial outer membrane protein porin 1 (VDAC1) from Oryza sativa subsp. japonica (Rice).